The primary structure comprises 134 residues: FK506-binding protein 2 (134 aa).

Residues 1–19 (MRFSIFSTLLVSLATLSTA) form the signal peptide. A PPIase FKBP-type domain is found at 39 to 127 (GDTVQMHYKG…IFETELVGID (89 aa)). The Prevents secretion from ER motif lies at 131-134 (KDEL).

This sequence belongs to the FKBP-type PPIase family. FKBP2 subfamily.

Its subcellular location is the endoplasmic reticulum. The catalysed reaction is [protein]-peptidylproline (omega=180) = [protein]-peptidylproline (omega=0). Inhibited by both FK506 and rapamycin. PPIases accelerate the folding of proteins. It catalyzes the cis-trans isomerization of proline imidic peptide bonds in oligopeptides. In Aspergillus oryzae (strain ATCC 42149 / RIB 40) (Yellow koji mold), this protein is FK506-binding protein 2 (fpr2).